Consider the following 449-residue polypeptide: Tubulin alpha chain (449 aa).

Gln11 lines the GTP pocket. Residue Lys40 is modified to N6-acetyllysine. 7 residues coordinate GTP: Glu71, Ser140, Gly144, Thr145, Thr179, Asn206, and Asn228. Glu71 serves as a coordination point for Mg(2+). Glu254 is an active-site residue.

Belongs to the tubulin family. Dimer of alpha and beta chains. A typical microtubule is a hollow water-filled tube with an outer diameter of 25 nm and an inner diameter of 15 nM. Alpha-beta heterodimers associate head-to-tail to form protofilaments running lengthwise along the microtubule wall with the beta-tubulin subunit facing the microtubule plus end conferring a structural polarity. Microtubules usually have 13 protofilaments but different protofilament numbers can be found in some organisms and specialized cells. Mg(2+) serves as cofactor. Post-translationally, undergoes a tyrosination/detyrosination cycle, the cyclic removal and re-addition of a C-terminal tyrosine residue by the enzymes tubulin tyrosine carboxypeptidase (TTCP) and tubulin tyrosine ligase (TTL), respectively. In terms of processing, some glutamate residues at the C-terminus are either polyglutamylated or polyglycylated. These 2 modifications occur exclusively on glutamate residues and result in either polyglutamate or polyglycine chains on the gamma-carboxyl group. Both modifications can coexist on the same protein on adjacent residues, and lowering polyglycylation levels increases polyglutamylation, and reciprocally. The precise function of such modifications is still unclear but they regulate the assembly and dynamics of axonemal microtubules. Acetylation of alpha chains at Lys-40 stabilizes microtubules and affects affinity and processivity of microtubule motors. This modification has a role in multiple cellular functions, ranging from cell motility, cell cycle progression or cell differentiation to intracellular trafficking and signaling.

It is found in the cytoplasm. The protein localises to the cytoskeleton. It carries out the reaction GTP + H2O = GDP + phosphate + H(+). Functionally, tubulin is the major constituent of microtubules, a cylinder consisting of laterally associated linear protofilaments composed of alpha- and beta-tubulin heterodimers. Microtubules grow by the addition of GTP-tubulin dimers to the microtubule end, where a stabilizing cap forms. Below the cap, tubulin dimers are in GDP-bound state, owing to GTPase activity of alpha-tubulin. The polypeptide is Tubulin alpha chain (Tetrahymena thermophila).